The following is a 175-amino-acid chain: Crossover junction endodeoxyribonuclease RuvC (175 aa).

Active-site residues include Asp16, Glu76, and Asp148. Mg(2+)-binding residues include Asp16, Glu76, and Asp148.

It belongs to the RuvC family. As to quaternary structure, homodimer which binds Holliday junction (HJ) DNA. The HJ becomes 2-fold symmetrical on binding to RuvC with unstacked arms; it has a different conformation from HJ DNA in complex with RuvA. In the full resolvosome a probable DNA-RuvA(4)-RuvB(12)-RuvC(2) complex forms which resolves the HJ. Mg(2+) serves as cofactor.

Its subcellular location is the cytoplasm. It catalyses the reaction Endonucleolytic cleavage at a junction such as a reciprocal single-stranded crossover between two homologous DNA duplexes (Holliday junction).. Its function is as follows. The RuvA-RuvB-RuvC complex processes Holliday junction (HJ) DNA during genetic recombination and DNA repair. Endonuclease that resolves HJ intermediates. Cleaves cruciform DNA by making single-stranded nicks across the HJ at symmetrical positions within the homologous arms, yielding a 5'-phosphate and a 3'-hydroxyl group; requires a central core of homology in the junction. The consensus cleavage sequence is 5'-(A/T)TT(C/G)-3'. Cleavage occurs on the 3'-side of the TT dinucleotide at the point of strand exchange. HJ branch migration catalyzed by RuvA-RuvB allows RuvC to scan DNA until it finds its consensus sequence, where it cleaves and resolves the cruciform DNA. The protein is Crossover junction endodeoxyribonuclease RuvC of Bradyrhizobium sp. (strain BTAi1 / ATCC BAA-1182).